The chain runs to 126 residues: Urease subunit beta (126 aa).

It belongs to the urease beta subunit family. Heterotrimer of UreA (gamma), UreB (beta) and UreC (alpha) subunits. Three heterotrimers associate to form the active enzyme.

Its subcellular location is the cytoplasm. It catalyses the reaction urea + 2 H2O + H(+) = hydrogencarbonate + 2 NH4(+). The protein operates within nitrogen metabolism; urea degradation; CO(2) and NH(3) from urea (urease route): step 1/1. The polypeptide is Urease subunit beta (Haloquadratum walsbyi (strain DSM 16790 / HBSQ001)).